The chain runs to 424 residues: MNADRQDVSLLMEEIGVAARSASRLLAQAPTKQKDAALLAAAMAVRANIDDILAANAEDVADAVKSGTAPSLIDRMTLDTKRIEAIARALEEIAALPDPVGATMAEWDRPNGLHISRVRVPLGVIGIIYESRPNVTADAGALCLKSGNAAILRGGSDAMRSSQAIHASILEGVIAAGLPEAAIQLVPTSDRGAVGEMLKGLGGNLDVIVPRGGKSLVARVQEEARVPVFAHLEGVCHVYVDGEADLDMARNIVLNAKLRRTGVCGAAETLLVDEACAATHLAPLVAALIAEGCEVRGDEAAQKADPRVKPATEDDWYTEYLDSIIAVRVVKGVKDAISHIAKYGSSHTEAIVTANQVTADRFLAEVDSAIVLHNASTQFADGGEFGMGAEIGIATGKFHARGPVGVEQLTSFKYLVRGSGQVRP.

This sequence belongs to the gamma-glutamyl phosphate reductase family.

The protein localises to the cytoplasm. It catalyses the reaction L-glutamate 5-semialdehyde + phosphate + NADP(+) = L-glutamyl 5-phosphate + NADPH + H(+). Its pathway is amino-acid biosynthesis; L-proline biosynthesis; L-glutamate 5-semialdehyde from L-glutamate: step 2/2. Catalyzes the NADPH-dependent reduction of L-glutamate 5-phosphate into L-glutamate 5-semialdehyde and phosphate. The product spontaneously undergoes cyclization to form 1-pyrroline-5-carboxylate. The sequence is that of Gamma-glutamyl phosphate reductase from Parvibaculum lavamentivorans (strain DS-1 / DSM 13023 / NCIMB 13966).